Here is a 405-residue protein sequence, read N- to C-terminus: Bifunctional enzyme IspD/IspF (405 aa).

A 2-C-methyl-D-erythritol 4-phosphate cytidylyltransferase region spans residues 1-246; sequence MLQMPSKQPI…KLSASLLPDV (246 aa). The tract at residues 247 to 405 is 2-C-methyl-D-erythritol 2,4-cyclodiphosphate synthase; sequence RTGNGYDVHQ…TATVVYRGRT (159 aa). A divalent metal cation is bound by residues Asp253 and His255. 4-CDP-2-C-methyl-D-erythritol 2-phosphate is bound by residues 253–255 and 279–280; these read DVH and HS. Residue His287 participates in a divalent metal cation binding. Residues 301-303, 377-380, Phe384, and Arg387 contribute to the 4-CDP-2-C-methyl-D-erythritol 2-phosphate site; these read DIG and TTNE.

It in the N-terminal section; belongs to the IspD/TarI cytidylyltransferase family. IspD subfamily. This sequence in the C-terminal section; belongs to the IspF family. It depends on a divalent metal cation as a cofactor.

The enzyme catalyses 2-C-methyl-D-erythritol 4-phosphate + CTP + H(+) = 4-CDP-2-C-methyl-D-erythritol + diphosphate. It carries out the reaction 4-CDP-2-C-methyl-D-erythritol 2-phosphate = 2-C-methyl-D-erythritol 2,4-cyclic diphosphate + CMP. It functions in the pathway isoprenoid biosynthesis; isopentenyl diphosphate biosynthesis via DXP pathway; isopentenyl diphosphate from 1-deoxy-D-xylulose 5-phosphate: step 2/6. Its pathway is isoprenoid biosynthesis; isopentenyl diphosphate biosynthesis via DXP pathway; isopentenyl diphosphate from 1-deoxy-D-xylulose 5-phosphate: step 4/6. In terms of biological role, bifunctional enzyme that catalyzes the formation of 4-diphosphocytidyl-2-C-methyl-D-erythritol from CTP and 2-C-methyl-D-erythritol 4-phosphate (MEP) (IspD), and catalyzes the conversion of 4-diphosphocytidyl-2-C-methyl-D-erythritol 2-phosphate (CDP-ME2P) to 2-C-methyl-D-erythritol 2,4-cyclodiphosphate (ME-CPP) with a corresponding release of cytidine 5-monophosphate (CMP) (IspF). The chain is Bifunctional enzyme IspD/IspF from Rhizobium etli (strain CIAT 652).